A 741-amino-acid chain; its full sequence is Lamin-B receptor (741 aa).

The segment at 29–126 (RLRRPRRTED…TGSGSGSSLP (98 aa)) is disordered. Composition is skewed to low complexity over residues 57–84 (TRRTGSVTAAGATATATATAGPATRTRA) and 109–126 (PRSSVGPLTGSGSGSSLP). Ser111 bears the Phosphoserine mark. A Phosphothreonine modification is found at Thr135. Ser144 is subject to Phosphoserine. The span at 160–184 (TNTSSGAPNKAFNTSSVNSGNSFSR) shows a compositional bias: polar residues. Residues 160 to 194 (TNTSSGAPNKAFNTSSVNSGNSFSRTTTSSTTTTT) are disordered. The segment covering 185–194 (TTTSSTTTTT) has biased composition (low complexity). Residues Ser223 and Ser225 each carry the phosphoserine modification. Positions 231 to 240 (LAGTPVTNTE) are enriched in polar residues. A disordered region spans residues 231–277 (LAGTPVTNTEEGSRYSRSVSRSVYDDEKSSKRSYSTGEEDIDEEDEL). A phosphothreonine mark is found at Thr234 and Thr237. Phosphoserine is present on residues Ser243, Ser246, Ser248, Ser250, and Ser263. Thr266 carries the post-translational modification Phosphothreonine. Residues 267 to 277 (GEEDIDEEDEL) show a composition bias toward acidic residues. Position 284 is a phosphoserine (Ser284). A Phosphothreonine modification is found at Thr288. Ser291 is subject to Phosphoserine. Thr293 is modified (phosphothreonine). Position 298 is a phosphoserine (Ser298). A run of 8 helical transmembrane segments spans residues 308–328 (FGGWLGAFLFLLLLPTAVYYL), 363–383 (VVGAFAAYQVVVFLLVALLPG), 402–422 (LTLLIASGVAEYLKYPVVTFV), 429–449 (FCIFGLVGAFVAAAWSYWLVD), 497–517 (LSLVTTLIYATCYIYQTLVWP), 543–563 (PATLFSASCLLFYVLDAIIFE), 577–599 (YGCLLLLRYAATPYLLTAVTKYF), and 604–624 (VPISCWYAPLAVAALLSLGLL). A phosphoserine mark is found at Ser640 and Ser642. Residues 687-707 (MALRPAWPPVLGLSLIILLLL) form a helical membrane-spanning segment.

It belongs to the ERG4/ERG24 family. As to quaternary structure, interacts directly with LAM.

Its subcellular location is the nucleus inner membrane. Anchors the lamina and the heterochromatin to the inner nuclear membrane. In Drosophila melanogaster (Fruit fly), this protein is Lamin-B receptor.